Here is a 63-residue protein sequence, read N- to C-terminus: MKAKELREKSVEELNAELLNLLREQFNLRMQAASGQLQQTHLLKQVRRDVARVKTLLTQKAGA.

Belongs to the universal ribosomal protein uL29 family.

The chain is Large ribosomal subunit protein uL29 from Klebsiella pneumoniae (strain 342).